A 164-amino-acid chain; its full sequence is T-cell surface glycoprotein CD3 zeta chain (164 aa).

The signal sequence occupies residues 1–21; it reads MKWKALFTAAILQAQLPITEA. The Extracellular portion of the chain corresponds to 22-30; the sequence is QSFGLLDPK. Residues 31–51 traverse the membrane as a helical segment; sequence LCYLLDGILFIYGVILTALFL. The Cytoplasmic portion of the chain corresponds to 52–164; it reads RVKFSRSADA…ALHMQALPPR (113 aa). At S58 the chain carries Phosphoserine. 3 ITAM domains span residues 61-89, 100-128, and 131-159; these read APAY…LDKR, PQRR…EIGM, and ERRR…LHMQ. Y64, Y72, Y83, Y111, Y123, Y142, and Y153 each carry phosphotyrosine. Residues 83 to 96 are compositionally biased toward basic and acidic residues; the sequence is YDVLDKRRGRDPEM. Positions 83 to 111 are disordered; that stretch reads YDVLDKRRGRDPEMGGKPQRRKNPQEGLY. Residues 128-154 form a disordered region; that stretch reads MKGERRRGKGHDGLYQGLSTATKDTYD.

It belongs to the CD3Z/FCER1G family. In terms of assembly, the TCR-CD3 complex is composed of a CD3D/CD3E and a CD3G/CD3E heterodimers that preferentially associate with TCRalpha and TCRbeta, respectively, to form TCRalpha/CD3E/CD3G and TCRbeta/CD3G/CD3E trimers. In turn, the hexamer interacts with CD3Z homodimer to form the TCR-CD3 complex. Alternatively, TCRalpha and TCRbeta can be replaced by TCRgamma and TCRdelta. Interacts with SLA. Interacts with TRAT1. Interacts with DOCK2. Interacts with SLA2. Interacts with SHB. Interacts with ZAP70. Interacts (tyrosine phosphorylated) with SHC1 (via SH2 domain). Interacts with PTPRC. Interacts with CRK; this interaction regulates CD3Z phosphorylation. Interacts (on T cell side) with CD81, ICAM1 and CD9 at immunological synapses between antigen-presenting cells and T cells. Interacts with CD160. Interacts with LY6E. The signaling subunit of immunoglobulin gamma (IgG) Fc receptor complex. As a homodimer or a heterodimer with FCER1G, associates with the ligand binding subunit FCGR3A (via transmembrane domain); this interaction is a prerequisite for Fc receptor complex expression on the cell surface. Interacts with CD5. As to quaternary structure, (Microbial infection) Interacts with HIV-1 Nef; this interaction up-regulates the expression of the Fas ligand (FASLG) at the cell surface. (Microbial infection) Interacts with HIV-2 Nef protein; this interaction induces down-regulation of cell surface TCR/CD3 complexes. Post-translationally, phosphorylated on Tyr residues after T-cell receptor triggering by LCK in association with CD4/CD8. In terms of tissue distribution, CD3Z is expressed in normal lymphoid tissue and in peripheral blood mononuclear cells (PBMCs).

Its subcellular location is the cell membrane. Its function is as follows. Part of the TCR-CD3 complex present on T-lymphocyte cell surface that plays an essential role in adaptive immune response. When antigen presenting cells (APCs) activate T-cell receptor (TCR), TCR-mediated signals are transmitted across the cell membrane by the CD3 chains CD3D, CD3E, CD3G and CD3Z. All CD3 chains contain immunoreceptor tyrosine-based activation motifs (ITAMs) in their cytoplasmic domain. Upon TCR engagement, these motifs become phosphorylated by Src family protein tyrosine kinases LCK and FYN, resulting in the activation of downstream signaling pathways. CD3Z ITAMs phosphorylation creates multiple docking sites for the protein kinase ZAP70 leading to ZAP70 phosphorylation and its conversion into a catalytically active enzyme. Plays an important role in intrathymic T-cell differentiation. Additionally, participates in the activity-dependent synapse formation of retinal ganglion cells (RGCs) in both the retina and dorsal lateral geniculate nucleus (dLGN). In Homo sapiens (Human), this protein is T-cell surface glycoprotein CD3 zeta chain (CD247).